The following is a 449-amino-acid chain: Phosphoglucosamine mutase (449 aa).

Ser-104 serves as the catalytic Phosphoserine intermediate. Mg(2+)-binding residues include Ser-104, Asp-243, Asp-245, and Asp-247. Ser-104 is subject to Phosphoserine.

Belongs to the phosphohexose mutase family. It depends on Mg(2+) as a cofactor. Post-translationally, activated by phosphorylation.

The catalysed reaction is alpha-D-glucosamine 1-phosphate = D-glucosamine 6-phosphate. In terms of biological role, catalyzes the conversion of glucosamine-6-phosphate to glucosamine-1-phosphate. The protein is Phosphoglucosamine mutase of Xanthomonas oryzae pv. oryzae (strain PXO99A).